The primary structure comprises 270 residues: Expansin-B10 (270 aa).

Residues 1–31 (MAVNVRTMWSSMRAQVAMVVALVFLVRGAWC) form the signal peptide. N-linked (GlcNAc...) asparagine glycosylation occurs at N41. The Expansin-like EG45 domain occupies 70 to 176 (GGGCGYKDVN…RRVKCKYDSK (107 aa)). 3 disulfides stabilise this stretch: C73-C101, C104-C171, and C109-C115. Residues 188–269 (NYLALLVKYV…NWKANTAYTA (82 aa)) enclose the Expansin-like CBD domain.

This sequence belongs to the expansin family. Expansin B subfamily. Expressed in pollen.

The protein resides in the secreted. It localises to the cell wall. Its subcellular location is the membrane. Its function is as follows. May aid fertilization by loosening the cell wall of the stigma and style, thereby facilitating penetration of the pollen tube. Acts selectively on grass cell walls, which are relatively poor in pectins and xyloglucans and rich in glucuronoarabinoxylans and (1-3),(1-4)-beta-D-glucans, when compared with cell walls of other angiosperms, including other monocots. The protein is Expansin-B10 (EXPB10) of Zea mays (Maize).